We begin with the raw amino-acid sequence, 425 residues long: C2H2 type master regulator of conidiophore development brlA (425 aa).

3 disordered regions span residues 28 to 72, 232 to 257, and 281 to 301; these read MASS…RHTG, KTHS…PMSR, and VQRQ…SLSL. Low complexity predominate over residues 30–44; the sequence is SSFSPMESPTPTPTS. Polar residues predominate over residues 232–256; that stretch reads KTHSPTTPVRSCSLGTTSGTDTPMS. Positions 285–294 are enriched in basic residues; that stretch reads PSRKVARKQS. 2 C2H2-type zinc fingers span residues 321 to 345 and 351 to 376; these read KGRF…PHVC and ERAF…GRNR. The segment covering 365–374 has biased composition (basic residues); sequence TKTHSKRGGR. The disordered stretch occupies residues 365 to 425; sequence TKTHSKRGGR…RETSEEAWLE (61 aa).

Its subcellular location is the nucleus. Its function is as follows. BrlA, abaA and wetA are pivotal regulators of conidiophore development and conidium maturation. They act individually and together to regulate their own expression and that of numerous other sporulation-specific genes. Binds promoters of target genes at brlA response elements (BREs) containing the conserved sequence 5'-(C/A)(A/G)AGGG(G/A)-3'. Also coordinates the expression of carbohydrate-active enzymes and of the key effectors of cell wall remodeling during autolysis. This Aspergillus niger (strain ATCC MYA-4892 / CBS 513.88 / FGSC A1513) protein is C2H2 type master regulator of conidiophore development brlA.